The primary structure comprises 109 residues: Putative double-stranded DNA mimic protein YciU (109 aa).

The protein belongs to the putative dsDNA mimic protein family.

Its function is as follows. May act as a double-stranded DNA (dsDNA) mimic. Probably regulates the activity of a dsDNA-binding protein. The protein is Putative double-stranded DNA mimic protein YciU of Salmonella arizonae (strain ATCC BAA-731 / CDC346-86 / RSK2980).